We begin with the raw amino-acid sequence, 161 residues long: Heme transporter hrg-6 (161 aa).

Helical transmembrane passes span 13 to 33, 38 to 58, 75 to 95, and 115 to 135; these read IAYT…YIFA, VALA…YFYL, VLFW…ITAI, and WWST…NAFI.

Belongs to the HRG family.

The protein resides in the membrane. Functionally, heme transporter. The protein is Heme transporter hrg-6 (hrg-6) of Caenorhabditis elegans.